Consider the following 381-residue polypeptide: Chaperone protein DnaJ (381 aa).

Residues 4–69 (DYYEILGVAR…EKRARYDQFG (66 aa)) form the J domain. Residues 139 to 221 (GGEKELRVTR…CGGSGLVRKT (83 aa)) form a CR-type zinc finger. Positions 152, 155, 169, 172, 195, 198, 209, and 212 each coordinate Zn(2+). 4 CXXCXGXG motif repeats span residues 152-159 (CGHCHGNG), 169-176 (CPTCQGRG), 195-202 (CSTCRGEG), and 209-216 (CRECGGSG).

Belongs to the DnaJ family. Homodimer. Zn(2+) is required as a cofactor.

It localises to the cytoplasm. Functionally, participates actively in the response to hyperosmotic and heat shock by preventing the aggregation of stress-denatured proteins and by disaggregating proteins, also in an autonomous, DnaK-independent fashion. Unfolded proteins bind initially to DnaJ; upon interaction with the DnaJ-bound protein, DnaK hydrolyzes its bound ATP, resulting in the formation of a stable complex. GrpE releases ADP from DnaK; ATP binding to DnaK triggers the release of the substrate protein, thus completing the reaction cycle. Several rounds of ATP-dependent interactions between DnaJ, DnaK and GrpE are required for fully efficient folding. Also involved, together with DnaK and GrpE, in the DNA replication of plasmids through activation of initiation proteins. This Carboxydothermus hydrogenoformans (strain ATCC BAA-161 / DSM 6008 / Z-2901) protein is Chaperone protein DnaJ.